Reading from the N-terminus, the 307-residue chain is MTPVPVSVDTTADFAAPPTKTAPSTSTRTLLLAPPSIAAHEEKLRDIFATFDRASTDLQMLDRLSAGFVSLPAATYDLVLVLTDTDSARRAEALQLLSRDVYSALVPSMKGGAKLQLQDGTWNSAEGLEAILAGLVEKDGAFEKPAYQEAAVPLRLGGKKKKAPAPTEQPPVATGVGFVDGNDELIDEDDLLSDDDLKRPMQQPANCQPEKAKKRRRPCKDCTCGLAAEMEAEDKARQEKADKDLNVLKLQSTDLSDEVDFTVQGKTSSCNSCSLGDAFRCSSCPYIGLPPFKPGEEVKILNNMVQL.

Disordered regions lie at residues 1–26 and 159–179; these read MTPV…PSTS and KKKK…VGFV. Positions 15-26 are enriched in low complexity; sequence AAPPTKTAPSTS. The interval 23-152 is N-terminal SAM-like domain; sequence PSTSTRTLLL…EKPAYQEAAV (130 aa). The segment at 153–197 is linker; the sequence is PLRLGGKKKKAPAPTEQPPVATGVGFVDGNDELIDEDDLLSDDDL. [2Fe-2S] cluster is bound by residues C207, C219, C222, and C224. The interval 207-224 is fe-S binding site A; that stretch reads CQPEKAKKRRRPCKDCTC. The [4Fe-4S] cluster site is built by C270, C273, C281, and C284. 2 consecutive short sequence motifs (cx2C motif) follow at residues 270–273 and 281–284; these read CNSC and CSSC. The fe-S binding site B stretch occupies residues 270–284; the sequence is CNSCSLGDAFRCSSC.

The protein belongs to the anamorsin family. As to quaternary structure, monomer. Interacts with tah18. Interacts with mia40. [2Fe-2S] cluster is required as a cofactor. [4Fe-4S] cluster serves as cofactor.

The protein resides in the cytoplasm. It localises to the mitochondrion intermembrane space. Its function is as follows. Component of the cytosolic iron-sulfur (Fe-S) protein assembly (CIA) machinery required for the maturation of extramitochondrial Fe-S proteins. Part of an electron transfer chain functioning in an early step of cytosolic Fe-S biogenesis, facilitating the de novo assembly of a [4Fe-4S] cluster on the scaffold complex cfd1-nbp35. Electrons are transferred to dre2 from NADPH via the FAD- and FMN-containing protein tah18. Tah18-dre2 are also required for the assembly of the diferric tyrosyl radical cofactor of ribonucleotide reductase (RNR), probably by providing electrons for reduction during radical cofactor maturation in the catalytic small subunit rnr2. The sequence is that of Fe-S cluster assembly protein dre2 from Aspergillus terreus (strain NIH 2624 / FGSC A1156).